A 349-amino-acid polypeptide reads, in one-letter code: Succinylglutamate desuccinylase (349 aa).

Residues histidine 70, glutamate 73, and histidine 166 each coordinate Zn(2+). Glutamate 229 is an active-site residue.

It belongs to the AspA/AstE family. Succinylglutamate desuccinylase subfamily. The cofactor is Zn(2+).

The catalysed reaction is N-succinyl-L-glutamate + H2O = L-glutamate + succinate. It functions in the pathway amino-acid degradation; L-arginine degradation via AST pathway; L-glutamate and succinate from L-arginine: step 5/5. Functionally, transforms N(2)-succinylglutamate into succinate and glutamate. In Burkholderia thailandensis (strain ATCC 700388 / DSM 13276 / CCUG 48851 / CIP 106301 / E264), this protein is Succinylglutamate desuccinylase.